Reading from the N-terminus, the 193-residue chain is Ion-translocating oxidoreductase complex subunit A (193 aa).

The next 6 membrane-spanning stretches (helical) occupy residues 5–25, 39–59, 72–92, 102–122, 134–154, and 171–191; these read LLLLVGTVLVNNFVLVQFLGL, IGMSFATVFVMTLASLLSYLV, LTTMSFILVIAVVVQFTEMVV, LLGIFLPLITTNCAVLGVALL, IIYGFGAALGFSLVLIMFSAM, and AIAMITAGLMSLAFLGFTGLV.

The protein belongs to the NqrDE/RnfAE family. The complex is composed of six subunits: RnfA, RnfB, RnfC, RnfD, RnfE and RnfG.

The protein localises to the cell inner membrane. Its function is as follows. Part of a membrane-bound complex that couples electron transfer with translocation of ions across the membrane. This is Ion-translocating oxidoreductase complex subunit A from Colwellia psychrerythraea (strain 34H / ATCC BAA-681) (Vibrio psychroerythus).